A 169-amino-acid chain; its full sequence is Peptide deformylase (169 aa).

Positions 93 and 135 each coordinate Fe cation. The active site involves Glu-136. A Fe cation-binding site is contributed by His-139.

This sequence belongs to the polypeptide deformylase family. Fe(2+) is required as a cofactor.

The enzyme catalyses N-terminal N-formyl-L-methionyl-[peptide] + H2O = N-terminal L-methionyl-[peptide] + formate. In terms of biological role, removes the formyl group from the N-terminal Met of newly synthesized proteins. Requires at least a dipeptide for an efficient rate of reaction. N-terminal L-methionine is a prerequisite for activity but the enzyme has broad specificity at other positions. The polypeptide is Peptide deformylase (Aquifex aeolicus (strain VF5)).